A 226-amino-acid polypeptide reads, in one-letter code: Clarin-3 (226 aa).

A helical transmembrane segment spans residues 8 to 28 (LMFLSGFLTSLGSVVVICSIL). Asn46 and Asn83 each carry an N-linked (GlcNAc...) asparagine glycan. The next 3 helical transmembrane spans lie at 92–112 (VVII…MFTF), 128–148 (GVYT…VLFV), and 181–201 (FWLI…IIFY).

The protein belongs to the clarin family.

The protein resides in the membrane. This chain is Clarin-3 (Clrn3), found in Rattus norvegicus (Rat).